Here is a 902-residue protein sequence, read N- to C-terminus: Cytosolic 10-formyltetrahydrofolate dehydrogenase (902 aa).

The segment at 1–310 (MKIAVIGQSL…LASNFFKGAA (310 aa)) is hydrolase domain. A Phosphoserine modification is found at Ser9. Position 38 is an N6-succinyllysine (Lys38). Residue 88-90 (QFI) participates in (6R)-10-formyltetrahydrofolate binding. The active-site Proton donor is the His106. Asp142 is a (6R)-10-formyltetrahydrofolate binding site. Residues 318 to 395 (EAELVTAEAV…DFIQLLVRKL (78 aa)) form the Carrier domain. Ser354 carries the O-(pantetheine 4'-phosphoryl)serine modification. The tract at residues 417–902 (TIRIPHQLFI…LRVKTVTFEY (486 aa)) is aldehyde dehydrogenase domain. NADP(+)-binding positions include 571-573 (IPW) and 597-600 (KPAQ). Phosphoserine is present on residues Ser629 and Ser631. Residues 630 to 635 (GSLVGQ) and 650 to 651 (GS) contribute to the NADP(+) site. N6-succinyllysine is present on Lys660. Glu673 acts as the Proton acceptor in catalysis. 673–674 (EL) lines the NADP(+) pocket. Cys707 serves as the catalytic Proton donor. Residue Lys757 coordinates NADP(+). Residue Lys767 is modified to N6-succinyllysine. Residue 804-806 (ESF) coordinates NADP(+). Residue Ser825 is modified to Phosphoserine. Position 882 is an N6-acetyllysine (Lys882).

In the N-terminal section; belongs to the GART family. The protein in the C-terminal section; belongs to the aldehyde dehydrogenase family. ALDH1L subfamily. Homotetramer. Phosphopantetheinylation at Ser-354 by AASDHPPT is required for the formyltetrahydrofolate dehydrogenase activity.

It localises to the cytoplasm. It is found in the cytosol. It catalyses the reaction (6R)-10-formyltetrahydrofolate + NADP(+) + H2O = (6S)-5,6,7,8-tetrahydrofolate + CO2 + NADPH + H(+). Functionally, cytosolic 10-formyltetrahydrofolate dehydrogenase that catalyzes the NADP(+)-dependent conversion of 10-formyltetrahydrofolate to tetrahydrofolate and carbon dioxide. May also have an NADP(+)-dependent aldehyde dehydrogenase activity towards formaldehyde, acetaldehyde, propionaldehyde, and benzaldehyde. The polypeptide is Cytosolic 10-formyltetrahydrofolate dehydrogenase (Pongo abelii (Sumatran orangutan)).